A 391-amino-acid chain; its full sequence is Pyruvate dehydrogenase E1 component subunit alpha, mitochondrial (391 aa).

The N-terminal 26 residues, 1 to 26 (MALSTSRAINHIMKPLSAAVCATRRL), are a transit peptide targeting the mitochondrion. The pyruvate site is built by H92, Y118, R119, G167, V169, D198, G199, A200, N227, and Y229. Y118, R119, G167, V169, D198, G199, A200, and N227 together coordinate thiamine diphosphate. D198 is a binding site for Mg(2+). Mg(2+) is bound by residues N227 and Y229. A thiamine diphosphate-binding site is contributed by H293. The segment at 294 to 313 (SMSDPGSTYRTRDEISGVRQ) is disordered. Basic and acidic residues predominate over residues 303–313 (RTRDEISGVRQ).

In terms of assembly, tetramer of 2 alpha and 2 beta subunits. It depends on thiamine diphosphate as a cofactor. Mg(2+) serves as cofactor.

It is found in the mitochondrion matrix. It catalyses the reaction N(6)-[(R)-lipoyl]-L-lysyl-[protein] + pyruvate + H(+) = N(6)-[(R)-S(8)-acetyldihydrolipoyl]-L-lysyl-[protein] + CO2. Its activity is regulated as follows. E1 activity is regulated by phosphorylation (inactivation) and dephosphorylation (activation) of the alpha subunit. Its function is as follows. The pyruvate dehydrogenase complex catalyzes the overall conversion of pyruvate to acetyl-CoA and CO(2). It contains multiple copies of three enzymatic components: pyruvate dehydrogenase (E1), dihydrolipoamide acetyltransferase (E2) and lipoamide dehydrogenase (E3). The polypeptide is Pyruvate dehydrogenase E1 component subunit alpha, mitochondrial (Solanum tuberosum (Potato)).